A 115-amino-acid polypeptide reads, in one-letter code: Hydrogenase maturation factor HypA (115 aa).

H2 provides a ligand contact to Ni(2+). Residues C74, C77, C90, and C93 each coordinate Zn(2+).

The protein belongs to the HypA/HybF family.

Functionally, involved in the maturation of [NiFe] hydrogenases. Required for nickel insertion into the metal center of the hydrogenase. This Desulfosudis oleivorans (strain DSM 6200 / JCM 39069 / Hxd3) (Desulfococcus oleovorans) protein is Hydrogenase maturation factor HypA.